We begin with the raw amino-acid sequence, 223 residues long: MQSSPLTSTLLFHIGPVAITRPVVTTWVIMAALALVCRFVTRRLAILPDGRQALLEGIVTSVAGQIEDVIRKDARPFLPLLGTLIIFLVVANLSGVLPGVEAPTSKIETPAALALIVFFSVHYFGVRERGLRGYLASFAEPKLIMLPLNILSEITRTFSLMVRLFGNIMSGEFIIGLVVALAGLFVPIPLMALEILVGLVQAYIFTVLATVFIGAAVGSVAKG.

Helical transmembrane passes span 17 to 37 (VAITRPVVTTWVIMAALALVC), 77 to 97 (FLPLLGTLIIFLVVANLSGVL), 106 to 126 (KIETPAALALIVFFSVHYFGV), 173 to 193 (FIIGLVVALAGLFVPIPLMAL), and 195 to 215 (ILVGLVQAYIFTVLATVFIGA).

It belongs to the ATPase A chain family. As to quaternary structure, F-type ATPases have 2 components, CF(1) - the catalytic core - and CF(0) - the membrane proton channel. CF(1) has five subunits: alpha(3), beta(3), gamma(1), delta(1), epsilon(1). CF(0) has four main subunits: a, b, b' and c.

The protein localises to the cell inner membrane. In terms of biological role, key component of the proton channel; it plays a direct role in the translocation of protons across the membrane. The polypeptide is ATP synthase subunit a 2 (Bradyrhizobium sp. (strain BTAi1 / ATCC BAA-1182)).